The chain runs to 207 residues: Dephospho-CoA kinase (207 aa).

Residues 10–207 (ILGLTGGIGS…FYLTLRGGQS (198 aa)) form the DPCK domain. 18–23 (GSGKSA) serves as a coordination point for ATP.

This sequence belongs to the CoaE family.

The protein localises to the cytoplasm. The catalysed reaction is 3'-dephospho-CoA + ATP = ADP + CoA + H(+). Its pathway is cofactor biosynthesis; coenzyme A biosynthesis; CoA from (R)-pantothenate: step 5/5. Its function is as follows. Catalyzes the phosphorylation of the 3'-hydroxyl group of dephosphocoenzyme A to form coenzyme A. In Pseudomonas savastanoi pv. phaseolicola (strain 1448A / Race 6) (Pseudomonas syringae pv. phaseolicola (strain 1448A / Race 6)), this protein is Dephospho-CoA kinase.